The sequence spans 322 residues: Olfactory receptor 5P2 (322 aa).

Residues 1-28 lie on the Extracellular side of the membrane; that stretch reads MNSLKDGNHTALTGFILLGLTDDPILRV. N-linked (GlcNAc...) asparagine glycosylation occurs at N8. Residues 29 to 42 traverse the membrane as a helical segment; sequence ILFMIILSGNLSII. At 43-50 the chain is on the cytoplasmic side; the sequence is ILIRISSQ. A helical transmembrane segment spans residues 51–71; that stretch reads LHHPMYFFLSHLAFADMAYSS. Over 72–95 the chain is Extracellular; the sequence is SVTPNMLVNFLVERNTVSYLGCAI. C93 and C185 form a disulfide bridge. A helical membrane pass occupies residues 96-116; that stretch reads QLGSAAFFATVECVLLAAMAY. Residues 117-135 lie on the Cytoplasmic side of the membrane; sequence DRFVAICSPLLYSTKMSTQ. A helical transmembrane segment spans residues 136–156; that stretch reads VSVQLLLVVYIAGFLIAVSYT. Residues 157-192 lie on the Extracellular side of the membrane; sequence TSFYFLLFCGPNQVNHFFCDFAPLLELSCSDISVST. A helical membrane pass occupies residues 193–213; it reads VVLSFSSGSIIVVTVCVIAVC. Residues 214 to 233 are Cytoplasmic-facing; sequence YIYILITILKMRSTEGHHKA. The chain crosses the membrane as a helical span at residues 234–254; the sequence is FSTCTSHLTVVTLFYGTITFI. Residues 255 to 267 are Extracellular-facing; that stretch reads YVMPNFSYSTDQN. N259 carries an N-linked (GlcNAc...) asparagine glycan. Residues 268–288 form a helical membrane-spanning segment; that stretch reads KVVSVLYTVVIPMLNPLIYSL. Over 289–322 the chain is Cytoplasmic; the sequence is RNKEIKGALKRELVRKILSHDACYFSRTSNNDIT.

It belongs to the G-protein coupled receptor 1 family. Expressed in the tongue.

It is found in the cell membrane. In terms of biological role, odorant receptor (Potential). May be involved in taste perception. The polypeptide is Olfactory receptor 5P2 (OR5P2) (Homo sapiens (Human)).